Here is a 341-residue protein sequence, read N- to C-terminus: G2/mitotic-specific cyclin C13-1 (341 aa).

It belongs to the cyclin family. Cyclin AB subfamily.

Its function is as follows. Essential for the control of the cell cycle at the G2/M (mitosis) transition. Interacts with the CDC2 and CDK2 protein kinases to form MPF. G2/M cyclins accumulate steadily during G2 and are abruptly destroyed at mitosis. The sequence is that of G2/mitotic-specific cyclin C13-1 from Daucus carota (Wild carrot).